Here is a 472-residue protein sequence, read N- to C-terminus: tRNA-2-methylthio-N(6)-dimethylallyladenosine synthase (472 aa).

The disordered stretch occupies residues 1 to 24 (MTGTPDVFPPATPGGTPLVALPAG). Positions 33-150 (GKLYIKTHGC…LPELIRARRE (118 aa)) constitute an MTTase N-terminal domain. Cys42, Cys79, Cys113, Cys187, Cys191, and Cys194 together coordinate [4Fe-4S] cluster. A Radical SAM core domain is found at 173 to 407 (RADGASAFVS…RINAHAAGIS (235 aa)). The TRAM domain occupies 408–471 (EKMVGTVQTV…TNSLRARVVA (64 aa)).

The protein belongs to the methylthiotransferase family. MiaB subfamily. Monomer. Requires [4Fe-4S] cluster as cofactor.

It localises to the cytoplasm. The enzyme catalyses N(6)-dimethylallyladenosine(37) in tRNA + (sulfur carrier)-SH + AH2 + 2 S-adenosyl-L-methionine = 2-methylsulfanyl-N(6)-dimethylallyladenosine(37) in tRNA + (sulfur carrier)-H + 5'-deoxyadenosine + L-methionine + A + S-adenosyl-L-homocysteine + 2 H(+). Functionally, catalyzes the methylthiolation of N6-(dimethylallyl)adenosine (i(6)A), leading to the formation of 2-methylthio-N6-(dimethylallyl)adenosine (ms(2)i(6)A) at position 37 in tRNAs that read codons beginning with uridine. The protein is tRNA-2-methylthio-N(6)-dimethylallyladenosine synthase of Stenotrophomonas maltophilia (strain R551-3).